Consider the following 275-residue polypeptide: NAD(P)H dehydrogenase [quinone] 1 (275 aa).

FAD-binding positions include histidine 13, 19–20, and glutamine 68; that span reads FN. Residue serine 83 is modified to Phosphoserine. 105–108 serves as a coordination point for FAD; that stretch reads LQWF. A substrate-binding site is contributed by 127–129; that stretch reads AYT. Residues 149–152, tyrosine 157, and arginine 202 contribute to the FAD site; that span reads TTGG. An important for apoenzyme conformational stability region spans residues 226–275; the sequence is PSSLFDLNFQAGFLLKKEIEDEQKNNKYGLSVGHHLGKPIPTDNQIKARK. A Glycyl lysine isopeptide (Lys-Gly) (interchain with G-Cter in SUMO2) cross-link involves residue lysine 252.

It belongs to the NAD(P)H dehydrogenase (quinone) family. In terms of assembly, homodimer. Interacts with PDLIM4 isoform 2; this interaction stabilizes PDLIM4 isoform 2 in response to oxidative stress and protects it from ubiquitin-independent degradation by the core 20S proteasome. Interacts with TP73 (via SAM domain); this interaction is NADH-dependent, stabilizes TP73 in response to oxidative stress and protects it from ubiquitin-independent degradation by the 20S proteasome. Interacts with TP53; this interaction is NADH-dependent, stabilizes TP53 in response to oxidative stress and protects it from ubiquitin-independent degradation by the 20S proteasome. FAD serves as cofactor.

Its subcellular location is the cytoplasm. It is found in the cytosol. The catalysed reaction is a quinone + NADH + H(+) = a quinol + NAD(+). It carries out the reaction a quinone + NADPH + H(+) = a quinol + NADP(+). The enzyme catalyses ubiquinone-10 + NADH + H(+) = ubiquinol-10 + NAD(+). It catalyses the reaction menadione + NADH + H(+) = menadiol + NAD(+). Flavin-containing quinone reductase that catalyzes two-electron reduction of quinones to hydroquinones using either NADH or NADPH as electron donors. In a ping-pong kinetic mechanism, the electrons are sequentially transferred from NAD(P)H to flavin cofactor and then from reduced flavin to the quinone, bypassing the formation of semiquinone and reactive oxygen species. Regulates cellular redox state primarily through quinone detoxification. Reduces components of plasma membrane redox system such as coenzyme Q and vitamin quinones, producing antioxidant hydroquinone forms. In the process may function as superoxide scavenger to prevent hydroquinone oxidation and facilitate excretion. Alternatively, can activate quinones and their derivatives by generating redox reactive hydroquinones with DNA cross-linking antitumor potential. Acts as a gatekeeper of the core 20S proteasome known to degrade proteins with unstructured regions. Upon oxidative stress, interacts with tumor suppressors TP53 and TP73 in a NADH-dependent way and inhibits their ubiquitin-independent degradation by the 20S proteasome. The chain is NAD(P)H dehydrogenase [quinone] 1 (NQO1) from Cavia porcellus (Guinea pig).